The primary structure comprises 349 residues: Divinyl chlorophyll a/b light-harvesting protein PcbA (349 aa).

6 helical membrane passes run 27 to 47, 57 to 77, 89 to 109, 202 to 222, 242 to 262, and 304 to 324; these read FIAA…AFTL, VPMG…GIGF, VVAV…GGLM, VMGG…FHIA, AILS…AFWS, and LANV…WHAL.

It belongs to the PsbB/PsbC family. IsiA/Pcb subfamily. The antenna complex consists of divinyl chlorophylls (a and b) and divinyl chlorophyll a/b binding proteins and binds more divinyl chlorophyll b than does the antenna complex from high-light-adapted Prochlorococcus. Divinyl chlorophyll a serves as cofactor. The cofactor is divinyl chlorophyll b.

The protein localises to the cellular thylakoid membrane. The antenna complex functions as a light receptor, it captures and delivers excitation energy to photosystems II and I. The Prochlorales pcb genes are not related to higher plant LHCs. The polypeptide is Divinyl chlorophyll a/b light-harvesting protein PcbA (pcbA) (Prochlorococcus marinus (strain NATL2A)).